The chain runs to 380 residues: Adaptive-response sensory kinase SasA (380 aa).

The segment at 20–101 (LLFVANRPGD…QKVDYWWPRW (82 aa)) is kaiB-like domain, interacts with KaiC. The Histidine kinase domain occupies 157–380 (LLAHELRNPL…CFHFTLPVYS (224 aa)). A Phosphohistidine; by autocatalysis modification is found at histidine 160.

As to quaternary structure, homotrimer with a small amount of possible homohexamer; a protein fragment of 109-380 is also a homotrimer. Interacts with KaiC, probably as 1 SasA trimer:1 KaiC homohexamer; unphosphorylated SasA has the highest affinity. Homodimer. Binds to the B-loop in the CI domain of KaiC; SasA and KaiB(fs) compete to bind to the CI domain. Binds preferentially to doubly phosphorylated KaiC. Post-translationally, autophosphorylates, probably on His-160.

The enzyme catalyses ATP + protein L-histidine = ADP + protein N-phospho-L-histidine.. Functionally, member of the two-component regulatory system SasA/RpaA involved in genome-wide circadian gene expression. One of several clock output pathways. Participates in the Kai clock protein complex, the main circadian regulator in cyanobacteria, via its interaction with KaiC. KaiC enhances the autophosphorylation activity of SasA, which then transfers its phosphate group to RpaA to activate it. In addition to its output function, recruits fold-shifted KaiB (KaiB(fs)) to KaiC to cooperatively form the KaiB(6):KaiC(6) complex (independent of SasA kinase activity). Required for robustness of the circadian rhythm of gene expression and is involved in clock output, also required for adaptation to light/dark cycles. This is Adaptive-response sensory kinase SasA from Thermosynechococcus vestitus (strain NIES-2133 / IAM M-273 / BP-1).